Here is a 41-residue protein sequence, read N- to C-terminus: Photosystem I reaction center subunit IX (41 aa).

A helical membrane pass occupies residues 7–27 (YLSTAPVLLTIWLTFTAGFII).

The protein belongs to the PsaJ family.

Its subcellular location is the plastid. The protein resides in the chloroplast thylakoid membrane. In terms of biological role, may help in the organization of the PsaE and PsaF subunits. This is Photosystem I reaction center subunit IX from Phaeodactylum tricornutum (strain CCAP 1055/1).